The chain runs to 827 residues: uncharacterized protein (827 aa).

A PAS 1 domain is found at 12 to 82 (FDADFEAILN…DMDIGVLSTG (71 aa)). The PAC 1 domain maps to 212–264 (LDVEFRLAAAEGGYSWYRSRAATRRAEDGSILRWYGTVEDIDDRRKMFEALKE). A PAS 2 domain is found at 265–335 (SEARFRAIAD…RVFYQAFDLR (71 aa)). Residues 338–390 (VRMEYRLKRAGGGSAWVIDIGQPRFASDGTFLGFVGIALDITERRNAEQERLL) form the PAC 2 domain. One can recognise a GGDEF domain in the interval 428-561 (TRLAILCLDL…GGGTIVQYEP (134 aa)). The 251-residue stretch at 570–820 (RQRMKVSLRH…QAMALLKSRS (251 aa)) folds into the EAL domain.

This is an uncharacterized protein from Sinorhizobium fredii (strain NBRC 101917 / NGR234).